The sequence spans 362 residues: Mortality factor 4-like protein 1 (362 aa).

Residues 12 to 51 form the Tudor-knot domain; the sequence is QEGERVLCFHGPLLYEAKCVKVAIKDKQVKYFIHYSGWNK. An interaction with KAT8 region spans residues 26-62; it reads YEAKCVKVAIKDKQVKYFIHYSGWNKKSAVRPRRSEK. Residues 113–182 are disordered; sequence RELQKANQEQ…RKKRARVDPT (70 aa). A sufficient for interaction with SIN3A region spans residues 133-266; that stretch reads PGKKTSGLQQ…VAGIKEYFNV (134 aa). The Nuclear localization signal motif lies at 135 to 146; sequence KKTSGLQQKNVE. An N6-acetyllysine modification is found at K143. The tract at residues 164 to 230 is interaction with RB1-1; it reads STSETPQPPR…FYLPAKKNVD (67 aa). The interval 188 to 342 is sufficient for interaction with PHF12; sequence TFMNRVEVKV…FLKYLAKNSA (155 aa). The MRG domain occupies 191–362; the sequence is NRVEVKVKIP…APPEYHRKAV (172 aa). The tract at residues 323 to 344 is interaction with RB1-2; sequence LALLLNYLHDFLKYLAKNSATL.

In terms of assembly, component of the NuA4 histone acetyltransferase complex which contains the catalytic subunit KAT5/TIP60 and the subunits EP400, TRRAP/PAF400, BRD8/SMAP, EPC1, DMAP1/DNMAP1, RUVBL1/TIP49, RUVBL2, ING3, actin, ACTL6A/BAF53A, MORF4L1/MRG15, MORF4L2/MRGX, MRGBP, YEATS4/GAS41, VPS72/YL1 and MEAF6. The NuA4 complex interacts with MYC and the adenovirus E1A protein. MORF4L1 may also participate in the formation of NuA4 related complexes which lack the KAT5/TIP60 catalytic subunit, but which include the SWI/SNF related protein SRCAP. Component of the mSin3A histone deacetylase complex, which includes SIN3A, HDAC2, ARID4B, MORF4L1, RBBP4/RbAp48, and RBBP7/RbAp46. May also interact with PHF12 and one or more as yet undefined members of the TLE (transducin-like enhancer of split) family of transcriptional repressors. Component of the SIN3B complex, which includes SIN3B, HDAC2 or HDAC1, PHF12 and MORF4L1. Interacts with RB1 and KAT8. Interacts with the N-terminus of MRFAP1. Found in a complex composed of MORF4L1, MRFAP1 and RB1. Interacts with the entire BRCA complex, which contains BRCA1, PALB2, BRCA2 and RAD51. Interacts with PALB2. Forms a complex with MSL1 and NUPR1.

The protein resides in the nucleus. Its function is as follows. Component of the NuA4 histone acetyltransferase (HAT) complex which is involved in transcriptional activation of select genes principally by acetylation of nucleosomal histones H4 and H2A. This modification may both alter nucleosome - DNA interactions and promote interaction of the modified histones with other proteins which positively regulate transcription. This complex may be required for the activation of transcriptional programs associated with oncogene and proto-oncogene mediated growth induction, tumor suppressor mediated growth arrest and replicative senescence, apoptosis, and DNA repair. The NuA4 complex ATPase and helicase activities seem to be, at least in part, contributed by the association of RUVBL1 and RUVBL2 with EP400. NuA4 may also play a direct role in DNA repair when directly recruited to sites of DNA damage. As part of the SIN3B complex represses transcription and counteracts the histone acetyltransferase activity of EP300 through the recognition H3K27ac marks by PHF12 and the activity of the histone deacetylase HDAC2. SIN3B complex is recruited downstream of the constitutively active genes transcriptional start sites through interaction with histones and mitigates histone acetylation and RNA polymerase II progression within transcribed regions contributing to the regulation of transcription. Required for homologous recombination repair (HRR) and resistance to mitomycin C (MMC). Involved in the localization of PALB2, BRCA2 and RAD51, but not BRCA1, to DNA-damage foci. The protein is Mortality factor 4-like protein 1 (Morf4l1) of Mus musculus (Mouse).